The following is a 423-amino-acid chain: Growth hormone-releasing hormone receptor (423 aa).

An N-terminal signal peptide occupies residues 1 to 22 (MDSGVWAACIFCLLSSLPVALG). Residues 23–130 (HVHPECDFIT…DEKSYFSTVR (108 aa)) lie on the Extracellular side of the membrane. Cystine bridges form between Cys-41–Cys-64, Cys-55–Cys-96, and Cys-78–Cys-112. Residue Asn-50 is glycosylated (N-linked (GlcNAc...) asparagine). Residues 131-151 (IVYTTGHSVSAVALFVAIAIL) form a helical membrane-spanning segment. Residues 152–167 (VALRRLHCPRNYIHSQ) lie on the Cytoplasmic side of the membrane. Residues 168 to 188 (LFATFILKAGAVFLKDAALFH) traverse the membrane as a helical segment. The Extracellular segment spans residues 189 to 210 (SENTDHCSFSTVLCKVSVATSH). The helical transmembrane segment at 211-231 (FATMTNFSWLLAEAVYLTCLL) threads the bilayer. Over 232-240 (ASTSPSTRR) the chain is Cytoplasmic. Residues 241 to 261 (AFWWLVLAGWGLPLLFTGTWV) form a helical membrane-spanning segment. The Extracellular segment spans residues 262–283 (GCKLAFEDVACWDLDDSSPYWW). The helical transmembrane segment at 284–304 (IIKGPIVLSVGVNFGLFLNII) threads the bilayer. Residues 305–331 (RILLRKLEPAQGSLHTQPQYWRLSKST) lie on the Cytoplasmic side of the membrane. A helical transmembrane segment spans residues 332–352 (LLLIPLFGIHYVIFNFLPDSA). Residues 353–357 (GLGIR) are Extracellular-facing. Residues 358–378 (LPLELGLGSFQGFIVAILYCF) traverse the membrane as a helical segment. At 379–423 (LNQEVRTEISRRWHGHDPELLPAWRTHAKWAKPSRSRAKVLTTVC) the chain is on the cytoplasmic side.

The protein belongs to the G-protein coupled receptor 2 family. Pituitary gland. Also detected in the lymphocytes and thymocytes.

The protein resides in the cell membrane. Functionally, receptor for GRF, coupled to G proteins which activate adenylyl cyclase. Stimulates somatotroph cell growth, growth hormone gene transcription and growth hormone secretion. The chain is Growth hormone-releasing hormone receptor (GHRHR) from Sus scrofa (Pig).